The chain runs to 484 residues: tRNA sulfurtransferase (484 aa).

The region spanning 61–165 is the THUMP domain; the sequence is PLILDLLKRT…GDKMLLVEAR (105 aa). ATP-binding positions include 183–184, lysine 265, glycine 287, and glutamine 296; that span reads LI. Cysteines 344 and 456 form a disulfide. Positions 404-483 constitute a Rhodanese domain; sequence LTEKDIILDI…YQNVKVFNLP (80 aa). The Cysteine persulfide intermediate role is filled by cysteine 456.

It belongs to the ThiI family.

It is found in the cytoplasm. It catalyses the reaction [ThiI sulfur-carrier protein]-S-sulfanyl-L-cysteine + a uridine in tRNA + 2 reduced [2Fe-2S]-[ferredoxin] + ATP + H(+) = [ThiI sulfur-carrier protein]-L-cysteine + a 4-thiouridine in tRNA + 2 oxidized [2Fe-2S]-[ferredoxin] + AMP + diphosphate. It carries out the reaction [ThiS sulfur-carrier protein]-C-terminal Gly-Gly-AMP + S-sulfanyl-L-cysteinyl-[cysteine desulfurase] + AH2 = [ThiS sulfur-carrier protein]-C-terminal-Gly-aminoethanethioate + L-cysteinyl-[cysteine desulfurase] + A + AMP + 2 H(+). It functions in the pathway cofactor biosynthesis; thiamine diphosphate biosynthesis. In terms of biological role, catalyzes the ATP-dependent transfer of a sulfur to tRNA to produce 4-thiouridine in position 8 of tRNAs, which functions as a near-UV photosensor. Also catalyzes the transfer of sulfur to the sulfur carrier protein ThiS, forming ThiS-thiocarboxylate. This is a step in the synthesis of thiazole, in the thiamine biosynthesis pathway. The sulfur is donated as persulfide by IscS. In Haemophilus ducreyi (strain 35000HP / ATCC 700724), this protein is tRNA sulfurtransferase.